A 234-amino-acid polypeptide reads, in one-letter code: Large ribosomal subunit protein uL1 (234 aa).

Belongs to the universal ribosomal protein uL1 family. Part of the 50S ribosomal subunit.

Binds directly to 23S rRNA. The L1 stalk is quite mobile in the ribosome, and is involved in E site tRNA release. In terms of biological role, protein L1 is also a translational repressor protein, it controls the translation of the L11 operon by binding to its mRNA. This chain is Large ribosomal subunit protein uL1, found in Escherichia coli (strain 55989 / EAEC).